Consider the following 432-residue polypeptide: Enolase (432 aa).

Gln167 contributes to the (2R)-2-phosphoglycerate binding site. Glu209 acts as the Proton donor in catalysis. The Mg(2+) site is built by Asp246, Glu290, and Asp317. (2R)-2-phosphoglycerate-binding residues include Lys342, Arg371, Ser372, and Lys393. Catalysis depends on Lys342, which acts as the Proton acceptor.

It belongs to the enolase family. As to quaternary structure, component of the RNA degradosome, a multiprotein complex involved in RNA processing and mRNA degradation. It depends on Mg(2+) as a cofactor.

It is found in the cytoplasm. Its subcellular location is the secreted. The protein localises to the cell surface. It catalyses the reaction (2R)-2-phosphoglycerate = phosphoenolpyruvate + H2O. The protein operates within carbohydrate degradation; glycolysis; pyruvate from D-glyceraldehyde 3-phosphate: step 4/5. In terms of biological role, catalyzes the reversible conversion of 2-phosphoglycerate (2-PG) into phosphoenolpyruvate (PEP). It is essential for the degradation of carbohydrates via glycolysis. The chain is Enolase from Shigella sonnei (strain Ss046).